The sequence spans 129 residues: Large ribosomal subunit protein uL22 (129 aa).

The protein belongs to the universal ribosomal protein uL22 family. Part of the 50S ribosomal subunit.

This protein binds specifically to 23S rRNA; its binding is stimulated by other ribosomal proteins, e.g. L4, L17, and L20. It is important during the early stages of 50S assembly. It makes multiple contacts with different domains of the 23S rRNA in the assembled 50S subunit and ribosome. In terms of biological role, the globular domain of the protein is located near the polypeptide exit tunnel on the outside of the subunit, while an extended beta-hairpin is found that lines the wall of the exit tunnel in the center of the 70S ribosome. In Metamycoplasma hominis (strain ATCC 23114 / DSM 25592 / NBRC 14850 / NCTC 10111 / PG21) (Mycoplasma hominis), this protein is Large ribosomal subunit protein uL22.